The sequence spans 170 residues: Phosphothreonine lyase OspF (170 aa).

Histidine 82 functions as the Proton donor in the catalytic mechanism. Catalysis depends on lysine 112, which acts as the Proton acceptor.

Belongs to the phosphothreonine lyase family.

The protein localises to the secreted. Functionally, catalyzes the removal of the phosphate group from the phosphothreonine in the mitogen-activated protein kinases such as MAPK2/ERK2, MAPK3/ERK1, MAPK8 and MAPK14 in an irreversible reaction, thus preventing the downstream phosphorylation of histone H3. This epigenetic modification results in inhibition of the transcription of a specific subset of pro-inflammatory genes, and ultimately to a reduced immune response against the invading pathogen. The diminished immune response enhances the bacterium's ability to disseminate and multiply within the host. The polypeptide is Phosphothreonine lyase OspF (ospF) (Shigella boydii).